Consider the following 763-residue polypeptide: High glucose sensor RGT2 (763 aa).

Positions 1–28 are disordered; that stretch reads MNDSQNCLRQREENSHLNPGNDFGHHQG. At 1-99 the chain is on the cytoplasmic side; it reads MNDSQNCLRQ…PLPLRSNVMS (99 aa). The helical transmembrane segment at 100–120 threads the bilayer; it reads VLVGIFVAVGGFLFGYDTGLI. At 121-144 the chain is on the extracellular side; it reads NSITDMPYVKTYIAPNHSYFTTSQ. N136 carries an N-linked (GlcNAc...) asparagine glycan. A helical transmembrane segment spans residues 145–165; that stretch reads IAILVSFLSLGTFFGALIAPY. Over 166 to 175 the chain is Cytoplasmic; it reads ISDSYGRKPT. A helical transmembrane segment spans residues 176–196; that stretch reads IMFSTAVIFSIGNSLQVASGG. Position 197 (L197) is a topological domain, extracellular. Residues 198-218 traverse the membrane as a helical segment; that stretch reads VLLIVGRVISGIGIGIISAVV. The Cytoplasmic segment spans residues 219–231; sequence PLYQAEAAQKNLR. Residues 232-252 form a helical membrane-spanning segment; that stretch reads GAIISSYQWAITIGLLVSSAV. Residues 253 to 266 are Extracellular-facing; the sequence is SQGTHSKNGPSSYR. Residues 267-287 form a helical membrane-spanning segment; sequence IPIGLQYVWSSILAVGMIFLP. At 288 to 357 the chain is on the cytoplasmic side; the sequence is ESPRYYVLKD…SENRPKQILR (70 aa). A helical transmembrane segment spans residues 358-378; the sequence is IFTGIAIQAFQQASGINFIFY. The Extracellular segment spans residues 379–393; it reads YGVNFFNNTGVDNSY. N-linked (GlcNAc...) asparagine glycosylation is present at N385. Residues 394–414 traverse the membrane as a helical segment; it reads LVSFISYAVNVAFSIPGMYLV. At 415–421 the chain is on the cytoplasmic side; the sequence is DRIGRRP. Residues 422–442 form a helical membrane-spanning segment; that stretch reads VLLAGGVIMAIANLVIAIVGV. Residues 443–452 lie on the Extracellular side of the membrane; sequence SEGKTVVASK. Residues 453-473 form a helical membrane-spanning segment; that stretch reads IMIAFICLFIAAFSATWGGVV. Over 474–491 the chain is Cytoplasmic; sequence WVVSAELYPLGVRSKCTA. A helical transmembrane segment spans residues 492-512; sequence ICAAANWLVNFTCALITPYIV. Topologically, residues 513-524 are extracellular; that stretch reads DVGSHTSSMGPK. Residues 525–545 traverse the membrane as a helical segment; it reads IFFIWGGLNVVAVIVVYFAVY. Topologically, residues 546-763 are cytoplasmic; it reads ETRGLTLEEI…SKHSQYTSPQ (218 aa). Over residues 725–737 the composition is skewed to low complexity; sequence SSTTSNDTSFSPS. Residues 725–763 are disordered; it reads SSTTSNDTSFSPSHNSNARTSSNWTSDLASKHSQYTSPQ. The segment covering 738–763 has biased composition (polar residues); that stretch reads HNSNARTSSNWTSDLASKHSQYTSPQ.

The protein belongs to the major facilitator superfamily. Sugar transporter (TC 2.A.1.1) family. Interacts with YCK1. Interacts with MTH1 and STD1. In terms of processing, phosphorylated in the C-terminal tail on Yck consensus sites in a yeast casein kinases YCK1 and YCK2 (Yck)-dependent manner. This phosphorylation is required for interaction with HXT corepressors MTH1 and STD1 and ultimately HXT expression.

The protein resides in the cell membrane. Its function is as follows. Low-affinity high glucose sensor that is part of the sensor/receptor-repressor (SSR) glucose-signaling pathway, which detects extracellular glucose and induces expression of glucose transporters that bring glucose into the cell. The transporter-like sensor generates an intracellular signal in the presence of high levels of glucose to promote high glucose-induced expression of HXT1. Binding of glucose to the RGT2 transmembrane domain activates a downstream signaling cascade, leading to phosphorylation of the RGT1 corepressors MTH1 and STD1, targeting them for SCF(Grr1)-dependent ubiquitination and degradation. Depletion of the corepressors robs RGT1 of its ability to repress expression of HXT genes, leading to accumulation of glucose transporters in the plasma membrane. Even though RGT2 is similar to glucose transporters, it appears to be unable to transport glucose. This Saccharomyces cerevisiae (strain ATCC 204508 / S288c) (Baker's yeast) protein is High glucose sensor RGT2.